The following is a 160-amino-acid chain: MELNKNYLTEEGLKQLEAELEHLIQVKRPAIIKLLQEARDQGDLSENADYDAAKAQQGEIETRIAEIQDILANVKLINESQTKKANKVTLGSTVEIYDYSSKTHEKYTIVGALEANPEEHRISNESPLAHAIYGRLVDDECDVVGIEVPYRVKIVKIINW.

Positions 8-28 (LTEEGLKQLEAELEHLIQVKR) form a coiled coil.

Belongs to the GreA/GreB family.

Necessary for efficient RNA polymerase transcription elongation past template-encoded arresting sites. The arresting sites in DNA have the property of trapping a certain fraction of elongating RNA polymerases that pass through, resulting in locked ternary complexes. Cleavage of the nascent transcript by cleavage factors such as GreA or GreB allows the resumption of elongation from the new 3'terminus. GreA releases sequences of 2 to 3 nucleotides. The polypeptide is Transcription elongation factor GreA (Mycoplasma pneumoniae (strain ATCC 29342 / M129 / Subtype 1) (Mycoplasmoides pneumoniae)).